Reading from the N-terminus, the 493-residue chain is Cytochrome P450 2E1 (493 aa).

Position 298–303 (298–303) interacts with substrate; that stretch reads FAGTET. Heme is bound at residue C437.

The protein belongs to the cytochrome P450 family. In terms of assembly, interacts with chaperones HSP70 and HSP90; this interaction is required for initial targeting to mitochondria. Requires heme as cofactor.

It localises to the endoplasmic reticulum membrane. The protein resides in the microsome membrane. It is found in the mitochondrion inner membrane. The catalysed reaction is an organic molecule + reduced [NADPH--hemoprotein reductase] + O2 = an alcohol + oxidized [NADPH--hemoprotein reductase] + H2O + H(+). The enzyme catalyses (5Z,8Z,11Z)-eicosatrienoate + reduced [NADPH--hemoprotein reductase] + O2 = 19-hydroxy-(5Z,8Z,11Z)-eicosatrienoate + oxidized [NADPH--hemoprotein reductase] + H2O + H(+). It carries out the reaction (5Z,8Z,11Z,14Z,17Z)-eicosapentaenoate + reduced [NADPH--hemoprotein reductase] + O2 = 19-hydroxy-(5Z,8Z,11Z,14Z,17Z)-eicosapentaenoate + oxidized [NADPH--hemoprotein reductase] + H2O + H(+). It catalyses the reaction (4Z,7Z,10Z,13Z,16Z,19Z)-docosahexaenoate + reduced [NADPH--hemoprotein reductase] + O2 = 21-hydroxy-(4Z,7Z,10Z,13Z,16Z,19Z)-docosahexaenoate + oxidized [NADPH--hemoprotein reductase] + H2O + H(+). The catalysed reaction is dodecanoate + reduced [NADPH--hemoprotein reductase] + O2 = 11-hydroxydodecanoate + oxidized [NADPH--hemoprotein reductase] + H2O + H(+). The enzyme catalyses tetradecanoate + reduced [NADPH--hemoprotein reductase] + O2 = 13-hydroxytetradecanoate + oxidized [NADPH--hemoprotein reductase] + H2O + H(+). It carries out the reaction 4-nitrophenol + NADPH + O2 + H(+) = 4-nitrocatechol + NADP(+) + H2O. Its pathway is lipid metabolism; fatty acid metabolism. Its activity is regulated as follows. The omega-1 hydroxylase activity is stimulated by cytochrome b5. In terms of biological role, a cytochrome P450 monooxygenase involved in the metabolism of fatty acids. Mechanistically, uses molecular oxygen inserting one oxygen atom into a substrate, and reducing the second into a water molecule, with two electrons provided by NADPH via cytochrome P450 reductase (NADPH--hemoprotein reductase). Catalyzes the hydroxylation of carbon-hydrogen bonds. Hydroxylates fatty acids specifically at the omega-1 position displaying the highest catalytic activity for saturated fatty acids. May be involved in the oxidative metabolism of xenobiotics. The polypeptide is Cytochrome P450 2E1 (Rattus norvegicus (Rat)).